A 149-amino-acid chain; its full sequence is Transcriptional repressor NrdR (149 aa).

The segment at 3–34 is a zinc-finger region; sequence CPFCSATDTKVIDSRLVADGHQVRRRRECAEC. The region spanning 49–139 is the ATP-cone domain; it reads PRVVKQDGSR…VYRAFEDVSE (91 aa).

This sequence belongs to the NrdR family. Zn(2+) serves as cofactor.

Its function is as follows. Negatively regulates transcription of bacterial ribonucleotide reductase nrd genes and operons by binding to NrdR-boxes. In Shewanella sediminis (strain HAW-EB3), this protein is Transcriptional repressor NrdR.